The chain runs to 361 residues: MLVSDFHFDLPDELIARYPTEERTASRLLHLNGETGHFEDKQFFDLLDQINEGDLLIFNNTRVIPARLYGRKASGGKLEVLVERVLDEHRCLAHVRASKAPKEGAELVLGEDKLGEGNGFKAIMTARHDALFELHFNEEQPVFDLLQQAGHMPLPPYIDRPDEDADQERYQTVYSKVLGAVAAPTAGLHFDNPTLEKLKAKGVNIAFVTLHVGAGTFQPVRVDNILDHKMHAEYAEVSQAVVDQILATKATGKRVIAVGTTSVRSIESAAQAAEKEGKLIAPFFSDTSIFLYPGKTFRIVDALVTNFHLPESTLIMLVSAFAGYRNTMKAYQHAVEAKYRFFSYGDAMFINKNPNALNDLP.

The protein belongs to the QueA family. Monomer.

The protein resides in the cytoplasm. The catalysed reaction is 7-aminomethyl-7-carbaguanosine(34) in tRNA + S-adenosyl-L-methionine = epoxyqueuosine(34) in tRNA + adenine + L-methionine + 2 H(+). It functions in the pathway tRNA modification; tRNA-queuosine biosynthesis. In terms of biological role, transfers and isomerizes the ribose moiety from AdoMet to the 7-aminomethyl group of 7-deazaguanine (preQ1-tRNA) to give epoxyqueuosine (oQ-tRNA). In Actinobacillus pleuropneumoniae serotype 7 (strain AP76), this protein is S-adenosylmethionine:tRNA ribosyltransferase-isomerase.